Consider the following 1294-residue polypeptide: Ethylene-insensitive protein 2 (1294 aa).

The Cytoplasmic portion of the chain corresponds to 1-12 (MEAEIVNVRPQL). The helical transmembrane segment at 13-33 (GFIQRMVPALLPVLLVSVGYI) threads the bilayer. Over 34-50 (DPGKWVANIEGGARFGY) the chain is Extracellular. The helical transmembrane segment at 51 to 71 (DLVAITLLFNFAAILCQYVAA) threads the bilayer. Over 72-105 (RISVVTGKHLAQICNEEYDKWTCMFLGIQAEFSA) the chain is Cytoplasmic. Residues 106–126 (ILLDLTMVVGVAHALNLLFGV) form a helical membrane-spanning segment. A topological domain (extracellular) is located at residue Glu127. The helical transmembrane segment at 128–148 (LSTGVFLAAMDAFLFPVFASF) threads the bilayer. Residues 149-155 (LENGMAN) lie on the Cytoplasmic side of the membrane. The chain crosses the membrane as a helical span at residues 156–176 (TVSIYSAGLVLLLYVSGVLLS). At 177 to 194 (QSEIPLSMNGVLTRLNGE) the chain is on the extracellular side. A helical membrane pass occupies residues 195-215 (SAFALMGLLGASIVPHNFYIH). Topologically, residues 216–237 (SYFAGESTSSSDVDKSSLCQDH) are cytoplasmic. Residues 238–258 (LFAIFGVFSGLSLVNYVLMNA) form a helical membrane-spanning segment. Over 259-287 (AANVFHSTGLVVLTFHDALSLMEQVFMSP) the chain is Extracellular. A helical membrane pass occupies residues 288–308 (LIPVVFLMLLFFSSQITALAW). The Cytoplasmic segment spans residues 309-334 (AFGGEVVLHDFLKIEIPAWLHRATIR). A run of 2 helical transmembrane segments spans residues 335-355 (ILAV…GIYQ) and 356-376 (LLIF…IPLF). Topologically, residues 377–397 (RIASSRQIMGVHKIPQVGEFL) are cytoplasmic. The helical transmembrane segment at 398-418 (ALTTFLGFLGLNVVFVVEMVF) threads the bilayer. The Extracellular portion of the chain corresponds to 419-440 (GSSDWAGGLRWNTVMGTSIQYT). The chain crosses the membrane as a helical span at residues 441-461 (TLLVSSCASLCLILWLAATPL). The Cytoplasmic portion of the chain corresponds to 462 to 1294 (KSASNRAEAQ…KNVTAYGSLG (833 aa)). Disordered stretches follow at residues 534–561 (TDQE…SSLK) and 623–662 (ETEE…SLSR). The span at 536–550 (QEIRSSPPEERELDV) shows a compositional bias: basic and acidic residues. Phosphoserine occurs at positions 645, 659, and 757. Position 819 is a phosphothreonine (Thr819). Phosphoserine is present on Ser924. A Nuclear localization signal motif is present at residues 1262–1269 (LKRYKRRL). The segment at 1269-1294 (LSNKPVGMNQDGPGSRKNVTAYGSLG) is disordered. Ser1283 carries the post-translational modification Phosphoserine.

Belongs to the NRAMP (TC 2.A.55) family. Interacts (via NLS) with ETR1. Interacts (via C-terminus) with EER5 and the COP9 signalosome subunits CSN3, CSN6A and CSN6B. Interacts with ETP1 and ETP2. Interacts with CTR1. Interacts with all members of the ethylene receptor family, including ETR1, ETR2, ERS1, ERS2 and EIN4. Binds to MRF3/ECIP1. In terms of assembly, interacts with several P-body components, such as XRN4/EIN5, PAB2, PAB4 and PAB8. Binds to ENAP1 in the presence of ethylene; this reaction facilitates its association with histone. Phosphorylated by CTR1 on at least 4 sites. Phosphorylation of Ser-645 and Ser-924 is involved in repressing EIN2 signaling. Loss of phosphorylation results in nuclear localization of the C-terminus of EIN2. Localized to the guard cells after methyl jasmonate treatment.

It is found in the endoplasmic reticulum membrane. The protein localises to the nucleus. Its subcellular location is the cytoplasm. Central factor in signaling pathways regulated by ethylene (ET) and involved in various processes including development, plant defense, senescence, nucleotide sugar flux, and tropisms. Necessary for ethylene-mediated gene regulation, and for the induction of some genes by ozone. Acts downstream of ET receptors, and upstream of ethylene regulated transcription factors. Required for cytokinin-mediated processes. Seems to be implicated in cross-talk between ET, jasmonate and other pathways. Probably not involved in iron uptake. Has a short half-life and undergoes rapid proteasome-mediated turnover in the absence of ethylene. Required for ethylene-induced EIN3 stabilization via proteasomal degradation of EBF1/EBF2 proteins. Regulates the leaf senescence induced by methyl jasmonate, ethylene and abscisic acid. Required during salt stress to confer resistance. Functionally, trafficking signal inducing ethylene response. The nuclear localization is both necessary and sufficient to activate EIN3-mediated transcription and ethylene responses. Involved in ethylene (ET)-mediated signaling pathways by triggering histone acetylation of H3K14 and H3K23 in an ENAP1-dependent manner, thus influencing the expression of ethylene-responsive genes. Necessary and sufficient for 3'-UTR-mediated translational repression of EBF1 and EBF2 mRNAs. Ethylene induces EIN2-CEND to associate with 3' UTRs in cytoplasmic foci and target EBF1/2 mRNAs to cytoplasmic processing-body (P-body). MPK6 regulates the cleavage and nuclear translocation of EIN2-CEND under methyl jasmonate treatment. Required for EIN3 accumulation. The polypeptide is Ethylene-insensitive protein 2 (Arabidopsis thaliana (Mouse-ear cress)).